The chain runs to 1059 residues: RNA-binding protein 26 (1059 aa).

Basic and acidic residues-rich tracts occupy residues 98-114 (EKEI…EKEK) and 130-147 (RHKD…DRES). Residues 98–275 (EKEIKKDEVN…PVDNSYASGS (178 aa)) form a disordered region. The span at 172 to 182 (LNSNKVQNAKN) shows a compositional bias: polar residues. Residues 184-213 (RSRDDRKRDDRFRKREYDRNVPRRDSYRDR) show a composition bias toward basic and acidic residues. Basic residues predominate over residues 214–231 (YNRRRGRSRSYSRSRSRS). Residues 232–266 (WSKERQRDRDRSRSRTRSRDKDSGKPKFDLDRPDP) are compositionally biased toward basic and acidic residues. Residues 327 to 355 (QMQKKRCRDYDEKGFCMRGDMCPFDHGSD) form a C3H1-type zinc finger. Pro residues predominate over residues 375–428 (PVLEGPPPPGLPPPPSLLTPPPVNLQPPPVPPPGPLPPSLPPVTGPPPPLPPLQ). A disordered region spans residues 375 to 443 (PVLEGPPPPG…APPNSATSSV (69 aa)). The span at 434-443 (APPNSATSSV) shows a compositional bias: low complexity. Positions 581 to 655 (TKLELRRIPP…RFIRMYWHRE (75 aa)) constitute an RRM 1 domain. A coiled-coil region spans residues 771–873 (GDAQKKKQEA…LLDTELDLYN (103 aa)). The region spanning 942–1011 (RALKISGFTE…QDLKLAWNKP (70 aa)) is the RRM 2 domain. The tract at residues 1010–1059 (KPVPNASSTEVEDADQEEEEFHEDSIVDDSLLQDDDEEEEDDNESRSWRR) is disordered. Acidic residues-rich tracts occupy residues 1019 to 1031 (EVED…EEFH) and 1040 to 1052 (LLQD…EDDN).

May be involved in the turnover of nuclear polyadenylated (pA+) RNA. In Xenopus laevis (African clawed frog), this protein is RNA-binding protein 26.